A 452-amino-acid polypeptide reads, in one-letter code: MATTFLQTSSTFGGSSTRGASLRAGGGSFGGGSLYGGGGSRSISASSARFVSSGAGGGFGGGMSCGFGGGFGGGFGGGFGGGFGDFGGGDGGLLSGNEKVTMQNLNDRLASYLDKVRALEQANTELEVKIRDWYQKQSPASPDRDYSHYFKTMEEIRDKILAATIDNSRVVLEIDNARLAADDFRLKYENELTLRQGVEADINGLRRVLDELTLARTDLEMQIEQLNEELAYLKKNHEEEMKEFSSQLAGQVNVEMDAAPGVDLTRMLAEMREQYEAIAEKNRRDVEAWFFSKTEELNKEVASNTEMIQTSKTEITDLRRTLQGLEIELQSQLSMKAGLENSLAEVECRYATQLQQIQGVITGLETQLSELRCEMEAQNQEYNMLLDIKTRLEQEIATYRNLLEGQDAKMAGIGVREGSSGGGGSSSSSSNFHISVEESVDGKVVSSRKREI.

The tract at residues 1 to 97 (MATTFLQTSS…GGDGGLLSGN (97 aa)) is head. A phosphoserine mark is found at Ser-15, Ser-16, Ser-28, Ser-33, and Ser-47. The coil 1A stretch occupies residues 98–133 (EKVTMQNLNDRLASYLDKVRALEQANTELEVKIRDW). Positions 98-410 (EKVTMQNLND…NLLEGQDAKM (313 aa)) constitute an IF rod domain. Thr-124 carries the post-translational modification Phosphothreonine. Positions 134-152 (YQKQSPASPDRDYSHYFKT) are linker 1. The coil 1B stretch occupies residues 153–244 (MEEIRDKILA…KNHEEEMKEF (92 aa)). Positions 245–264 (SSQLAGQVNVEMDAAPGVDL) are linker 12. The tract at residues 265 to 406 (TRMLAEMREQ…ATYRNLLEGQ (142 aa)) is coil 2. Lys-293 is covalently cross-linked (Glycyl lysine isopeptide (Lys-Gly) (interchain with G-Cter in SUMO2)). Residues Thr-294 and Thr-316 each carry the phosphothreonine modification. Positions 407–452 (DAKMAGIGVREGSSGGGGSSSSSSNFHISVEESVDGKVVSSRKREI) are tail. The interval 413–452 (IGVREGSSGGGGSSSSSSNFHISVEESVDGKVVSSRKREI) is disordered. Lys-443 participates in a covalent cross-link: Glycyl lysine isopeptide (Lys-Gly) (interchain with G-Cter in SUMO1); alternate. A Glycyl lysine isopeptide (Lys-Gly) (interchain with G-Cter in SUMO2); alternate cross-link involves residue Lys-443.

It belongs to the intermediate filament family. Heterotetramer of two type I and two type II keratins. Forms a heterodimer with KRT14. Interacts with PLEC isoform 1C, when in a heterodimer with KRT14. Interacts with NOD2. As to expression, expressed strongly in the basal cell layer at the tips of rete-like prominences (RLPs) of adult dorsal tongue, outer root sheath (ORS) of hair follicle and skin epidermis (at protein level).

In terms of biological role, in the absence of KRT14, makes a bona fide, but ultrastructurally distinct keratin filament network with KRT5. The sequence is that of Keratin, type I cytoskeletal 15 (Krt15) from Mus musculus (Mouse).